The primary structure comprises 550 residues: C-type lectin domain family 4 member F (550 aa).

Residues 1–42 lie on the Cytoplasmic side of the membrane; sequence MKEAELNRDVAKFCTDNQCVILQPQGLGPKSAAPMAPRTLRH. A helical; Signal-anchor for type II membrane protein transmembrane segment spans residues 43–69; sequence VQAIVALVVVTVFFSLLALFVVVLQPW. The Extracellular segment spans residues 70-550; the sequence is RQKQNEDHPV…DWSVARTDQS (481 aa). N87, N93, N115, N132, N209, and N255 each carry an N-linked (GlcNAc...) asparagine glycan. Positions 438–538 constitute a C-type lectin domain; it reads NFCVSQGAHL…GTAYNWVCKK (101 aa). Disulfide bonds link C440–C536 and C516–C528.

Kupffer cells.

The protein localises to the membrane. Its function is as follows. Receptor with an affinity for galactose and fucose. Could be involved in endocytosis. The chain is C-type lectin domain family 4 member F (Clec4f) from Rattus norvegicus (Rat).